Reading from the N-terminus, the 413-residue chain is Gamma-glutamyl phosphate reductase (413 aa).

Belongs to the gamma-glutamyl phosphate reductase family.

It is found in the cytoplasm. It catalyses the reaction L-glutamate 5-semialdehyde + phosphate + NADP(+) = L-glutamyl 5-phosphate + NADPH + H(+). It functions in the pathway amino-acid biosynthesis; L-proline biosynthesis; L-glutamate 5-semialdehyde from L-glutamate: step 2/2. In terms of biological role, catalyzes the NADPH-dependent reduction of L-glutamate 5-phosphate into L-glutamate 5-semialdehyde and phosphate. The product spontaneously undergoes cyclization to form 1-pyrroline-5-carboxylate. The polypeptide is Gamma-glutamyl phosphate reductase (Geobacillus sp. (strain WCH70)).